Here is a 228-residue protein sequence, read N- to C-terminus: Ribulose-phosphate 3-epimerase-like protein 1 (228 aa).

Residue Ser-10 participates in substrate binding. 3 residues coordinate a divalent metal cation: His-35, Asp-37, and His-70. Asp-37 serves as the catalytic Proton acceptor. Substrate contacts are provided by residues His-70, 146 to 149 (GFGE), 175 to 177 (DGG), and 197 to 198 (GS). Asp-175 lines the a divalent metal cation pocket. The active-site Proton donor is Asp-175.

This sequence belongs to the ribulose-phosphate 3-epimerase family. As to quaternary structure, homodimer. The cofactor is Fe(2+). Mn(2+) serves as cofactor. It depends on Zn(2+) as a cofactor. Requires Co(2+) as cofactor.

It catalyses the reaction D-ribulose 5-phosphate = D-xylulose 5-phosphate. The protein operates within carbohydrate degradation. Catalyzes the reversible epimerization of D-ribulose 5-phosphate to D-xylulose 5-phosphate. The protein is Ribulose-phosphate 3-epimerase-like protein 1 (RPEL1) of Homo sapiens (Human).